The chain runs to 196 residues: GTP cyclohydrolase 1 (196 aa).

Zn(2+)-binding residues include Cys86, His89, and Cys158.

It belongs to the GTP cyclohydrolase I family. As to quaternary structure, toroid-shaped homodecamer, composed of two pentamers of five dimers.

The enzyme catalyses GTP + H2O = 7,8-dihydroneopterin 3'-triphosphate + formate + H(+). It functions in the pathway cofactor biosynthesis; 7,8-dihydroneopterin triphosphate biosynthesis; 7,8-dihydroneopterin triphosphate from GTP: step 1/1. This Clostridium botulinum (strain ATCC 19397 / Type A) protein is GTP cyclohydrolase 1.